Consider the following 263-residue polypeptide: Small ribosomal subunit protein bS1c (263 aa).

S1 motif domains follow at residues 27–96 (GDIV…LSIR), 114–178 (DSLL…LSHR), and 192–260 (GNII…LSMK).

This sequence belongs to the bacterial ribosomal protein bS1 family.

Its subcellular location is the plastid. The protein localises to the chloroplast. The sequence is that of Small ribosomal subunit protein bS1c (rps1) from Pyropia yezoensis (Susabi-nori).